A 285-amino-acid polypeptide reads, in one-letter code: Bifunctional protein FolD (285 aa).

NADP(+)-binding positions include 165–167 (GRS) and S190.

It belongs to the tetrahydrofolate dehydrogenase/cyclohydrolase family. As to quaternary structure, homodimer.

It catalyses the reaction (6R)-5,10-methylene-5,6,7,8-tetrahydrofolate + NADP(+) = (6R)-5,10-methenyltetrahydrofolate + NADPH. The catalysed reaction is (6R)-5,10-methenyltetrahydrofolate + H2O = (6R)-10-formyltetrahydrofolate + H(+). It participates in one-carbon metabolism; tetrahydrofolate interconversion. Its function is as follows. Catalyzes the oxidation of 5,10-methylenetetrahydrofolate to 5,10-methenyltetrahydrofolate and then the hydrolysis of 5,10-methenyltetrahydrofolate to 10-formyltetrahydrofolate. The chain is Bifunctional protein FolD from Burkholderia ambifaria (strain ATCC BAA-244 / DSM 16087 / CCUG 44356 / LMG 19182 / AMMD) (Burkholderia cepacia (strain AMMD)).